Reading from the N-terminus, the 254-residue chain is Alcohol dehydrogenase (254 aa).

10–33 (FVAGLGGIGLDTSREIVKSGPKNL) contacts NAD(+). A substrate-binding site is contributed by Ser-138. Tyr-151 acts as the Proton acceptor in catalysis.

This sequence belongs to the short-chain dehydrogenases/reductases (SDR) family. In terms of assembly, homodimer.

It catalyses the reaction a primary alcohol + NAD(+) = an aldehyde + NADH + H(+). It carries out the reaction a secondary alcohol + NAD(+) = a ketone + NADH + H(+). This chain is Alcohol dehydrogenase (Adh), found in Drosophila differens (Fruit fly).